Consider the following 326-residue polypeptide: Vomeronasal type-1 receptor 100 (326 aa).

Residues 1 to 32 (MSEFPFFSPQPLFSYMMNKNSRVHTDSNIRNT) lie on the Extracellular side of the membrane. A helical membrane pass occupies residues 33–53 (FFTEIGIGILANSFLLLFHIF). The Cytoplasmic segment spans residues 54–70 (KFIRGQRSRLTDLPIGL). A helical membrane pass occupies residues 71–91 (LSLIHLLMLLMGAFIAIDIFI). Topologically, residues 92–104 (SWRGWDDIICKFL) are extracellular. An intrachain disulfide couples Cys-101 to Cys-188. Residues 105 to 127 (VYLYRSFRGLSLCTTCMLSVLQA) traverse the membrane as a helical segment. Over 128-149 (ITLSPRSSCLAKFKHKSPHHVS) the chain is Cytoplasmic. A helical transmembrane segment spans residues 150–170 (CAIISLSILYMFISSHLLVSI). The Extracellular portion of the chain corresponds to 171–209 (NATPNLTTNNFMQVTQSCYIIPLSYLMQSMFSTLLAIRD). Asn-175 is a glycosylation site (N-linked (GlcNAc...) asparagine). Residues 210-230 (ISLISLMVLSTCYMVVLLCRH) form a helical membrane-spanning segment. Topologically, residues 231–254 (RNQIQHLQGTNLSPKASPEQRATQ) are cytoplasmic. Residues 255–275 (TILMLMTFFVLMSIFDSIVSC) traverse the membrane as a helical segment. At 276 to 285 (SRTMYLNDPT) the chain is on the extracellular side. Residues 286–306 (SYYIQIFVVYIYATVSPFVFM) form a helical membrane-spanning segment. Residues 307–326 (STEKHIVNFLKSMCVRVKNV) are Cytoplasmic-facing.

This sequence belongs to the G-protein coupled receptor 1 family. In terms of tissue distribution, expressed in 1-4% of neurons of the vomeronasal organ. Only one pheromone receptor gene may be expressed in a particular neuron. Not expressed in the main olfactory epithelium.

The protein resides in the cell membrane. Functionally, putative pheromone receptor implicated in the regulation of social as well as reproductive behavior. The polypeptide is Vomeronasal type-1 receptor 100 (Vom1r100) (Rattus norvegicus (Rat)).